The sequence spans 88 residues: Large ribosomal subunit protein eL31 (88 aa).

This sequence belongs to the eukaryotic ribosomal protein eL31 family.

The chain is Large ribosomal subunit protein eL31 from Saccharolobus islandicus (strain Y.N.15.51 / Yellowstone #2) (Sulfolobus islandicus).